Consider the following 248-residue polypeptide: Eukaryotic translation initiation factor 6 (248 aa).

This sequence belongs to the eIF-6 family. Monomer. Associates with the 60S ribosomal subunit.

The protein resides in the cytoplasm. Its subcellular location is the nucleus. It is found in the nucleolus. Functionally, binds to the 60S ribosomal subunit and prevents its association with the 40S ribosomal subunit to form the 80S initiation complex in the cytoplasm. May also be involved in ribosome biogenesis. The sequence is that of Eukaryotic translation initiation factor 6 from Trypanosoma cruzi (strain CL Brener).